The chain runs to 138 residues: Small ribosomal subunit protein uS11c (138 aa).

Residues 1–23 are disordered; it reads MAKPILRIGSRKNTRSSSRKNVR. Residues 9–23 are compositionally biased toward basic residues; it reads GSRKNTRSSSRKNVR.

The protein belongs to the universal ribosomal protein uS11 family. As to quaternary structure, part of the 30S ribosomal subunit.

The protein resides in the plastid. Its subcellular location is the chloroplast. The polypeptide is Small ribosomal subunit protein uS11c (Nasturtium officinale (Watercress)).